Reading from the N-terminus, the 603-residue chain is F-box only protein 46 (603 aa).

The disordered stretch occupies residues 20-54 (YSQNQPRPPSATLKPPVCPDTSSGTEPDHRPAHLE). Phosphoserine occurs at positions 21 and 67. Disordered stretches follow at residues 111 to 163 (GGSR…PTSS), 235 to 301 (EAQR…TRAK), 332 to 359 (EASE…ARDC), and 396 to 442 (TVSP…GTTD). A Phosphothreonine modification is found at T347. The segment covering 347–356 (TPPAPPPPPA) has biased composition (pro residues). Residues 470–522 (RQYMLLLPEHVLVKIFSFLPTRALAALKCTCHHFKGIIEAFGVRATDSRWSRD) enclose the F-box domain.

As to quaternary structure, part of a SCF (SKP1-cullin-F-box) protein ligase complex SCF(FBXO46) composed of CUL1, SKP1, RBX1 and FBXO46. In terms of processing, phosphorylated by ATM in response to DNA damage, promoting ubiquitination and degradation by the SCF(FBXO31) complex. ATM-phosphorylated FBXO46 is ubiquitinated and degradaded by the SCF(FBXO31) complex in response to DNA damage.

It participates in protein modification; protein ubiquitination. Its function is as follows. Substrate-recognition component of the SCF(FBXO46) protein ligase complex, which mediates the ubiquitination and degradation of target proteins. In absence of stress, the SCF(FBXO46) complex catalyzes ubiquitination and degradation of MTOR-phosphorylated FBXO31. The protein is F-box only protein 46 (Fbxo46) of Rattus norvegicus (Rat).